The following is a 271-amino-acid chain: Probable L,D-transpeptidase 3 (271 aa).

Positions 127 to 270 (VVGVASISQH…VDIGDPVIVQ (144 aa)) constitute a L,D-TPase catalytic domain. Catalysis depends on His-228, which acts as the Proton donor/acceptor. Residue Cys-246 is the Nucleophile of the active site.

It participates in cell wall biogenesis; peptidoglycan biosynthesis. Its activity is regulated as follows. Is irreversibly inactivated by the beta-lactam carbapenems via the formation of a covalent adduct resulting from acylation of the catalytic Cys. Imipenem is the most efficient drug for in vitro LdtMt3/Rv1433 inactivation. In terms of biological role, probable L,D-transpeptidase that may perform as-yet-unknown cross-linking reactions in M.tuberculosis. Is not able to generate 3-&gt;3 cross-links in peptidoglycan, using tetrapeptide stems as acyl donor substrates. May function in the anchoring of proteins to peptidoglycan. The sequence is that of Probable L,D-transpeptidase 3 from Mycobacterium tuberculosis (strain ATCC 25618 / H37Rv).